The following is a 301-amino-acid chain: Probable alpha-L-glutamate ligase (301 aa).

Residues 104–287 form the ATP-grasp domain; that stretch reads LQLLSRRGIG…VAGMIIEHLE (184 aa). ATP is bound by residues Lys-141, 178–179, Asp-187, and 211–213; these read EY and RSN. Mg(2+) is bound by residues Asp-248, Glu-260, and Asn-262. Residues Asp-248, Glu-260, and Asn-262 each contribute to the Mn(2+) site.

This sequence belongs to the RimK family. Mg(2+) serves as cofactor. Mn(2+) is required as a cofactor.

This Pseudomonas putida (strain GB-1) protein is Probable alpha-L-glutamate ligase.